A 308-amino-acid chain; its full sequence is Homeobox-leucine zipper protein HOX2 (308 aa).

2 disordered regions span residues 15–36 (QGSL…SSPW) and 71–117 (QGRA…RKKL). Positions 74–88 (ASTSPDSAAALSSAS) are enriched in low complexity. Residues 112–171 (GGRKKLRLSKDQAAVLEECFKTHSTLNPKQKVALANRLGLRPRQVEVWFQNRRARTKLKQ) constitute a DNA-binding region (homeobox). Positions 170-214 (KQTEVDCEYLKRWCERLADENKRLEKELADLRALKAAPSPASASA) are leucine-zipper.

It belongs to the HD-ZIP homeobox family. Class II subfamily. As to quaternary structure, homodimer. May form a heterodimer with HOX1, HOX3 or HOX7. Expressed in seedlings, roots, leaves, nodes, internodes, flowers and embryo.

Its subcellular location is the nucleus. Its function is as follows. Probable transcription factor that binds to the DNA sequence 5'-CAAT[GC]ATTG-3'. The chain is Homeobox-leucine zipper protein HOX2 (HOX2) from Oryza sativa subsp. indica (Rice).